We begin with the raw amino-acid sequence, 322 residues long: MSDVRNVIIIGSGPAGYTAALYTARASLKPLVFEGAVTAGGALMNTTEVENFPGFQDGIMGPELMDNMRAQAERFGAELIPDDVVAVDLSGEIKTVTDTAGTVHRAKAVIVTTGSQHRKLGLPNEDALSGRGVSWCATCDGFFFKDQDIAVIGGGDTAMEEATFLSRFAKSVTIVHRRDTLRASKAMQERAFADPKISFVWDSEVAEVQGDQKLAGLKLRNVKTGELSDLPVTGLFIAIGHDPRTELFKGQLDLDPEGYLKVDAPSTRTNLTGVFGAGDVVDHTYRQAITAAGTGCSAAVDAEPFLAALSDEDKAEPEKTAV.

FAD is bound by residues 12-15 (SGPA), 34-42 (EGAVTAGGA), asparagine 51, and valine 84. The cysteines at positions 136 and 139 are disulfide-linked. NADP(+) contacts are provided by histidine 176, arginine 182, isoleucine 239, and tyrosine 259. FAD-binding positions include aspartate 279 and 286 to 289 (RQAI). Position 286 (arginine 286) interacts with NADP(+).

It belongs to the class-II pyridine nucleotide-disulfide oxidoreductase family. As to quaternary structure, homodimer. Requires FAD as cofactor.

The protein resides in the cytoplasm. It catalyses the reaction [thioredoxin]-dithiol + NADP(+) = [thioredoxin]-disulfide + NADPH + H(+). The polypeptide is Thioredoxin reductase (Streptomyces coelicolor (strain ATCC BAA-471 / A3(2) / M145)).